Here is a 360-residue protein sequence, read N- to C-terminus: Ribosomal RNA large subunit methyltransferase M (360 aa).

S-adenosyl-L-methionine is bound by residues S192, 225–228, D244, D264, and D280; that span reads APGG. The active-site Proton acceptor is K309.

This sequence belongs to the class I-like SAM-binding methyltransferase superfamily. RNA methyltransferase RlmE family. RlmM subfamily. In terms of assembly, monomer.

The protein localises to the cytoplasm. It catalyses the reaction cytidine(2498) in 23S rRNA + S-adenosyl-L-methionine = 2'-O-methylcytidine(2498) in 23S rRNA + S-adenosyl-L-homocysteine + H(+). Functionally, catalyzes the 2'-O-methylation at nucleotide C2498 in 23S rRNA. The chain is Ribosomal RNA large subunit methyltransferase M from Alkalilimnicola ehrlichii (strain ATCC BAA-1101 / DSM 17681 / MLHE-1).